A 2559-amino-acid chain; its full sequence is MTATTRGSPVGGNDNQGQAPDGQSQPPLQQNQTSSPDSSNENSPATPPDEQGQGDAPPQIEDEEPAFPHTDLAKLDDMINRPRWVVPVLPKGELEVLLEAAIDLSKKGLDVKSEACQRFFRDGLTISFTKILTDEAVSGWKFEIHRCIINNTHRLVELCVAKLAQDWFPLLELLAMALNPHCKFHIYNGTRPCESVSSSVQLPEDELFARSPDPRSPKGWLVDLLNKFGTLNGFQILHDRFINGSALNVQIIAALIKPFGQCYEFLTLHTVKKYFLPIIEMVPQFLENLTDEELKKEAKNEAKNDALSMIIKSLKNLASRVPGQEETVKNLEIFRLKMILRLLQISSFNGKMNALNEVNKVISSVSYYTHRHGSSEDEEWLTAERMAEWIQQNNILSIVLRDSLHQPQYVEKLEKILRFVIKEKALTLQDLDNIWAAQAGKHEAIVKNVHDLLAKLAWDFSPEQLDHLFDCFKASWTNASKKQREKLLELIRRLAEDDKDGVMAHKVLNLLWNLAHSDDVPVDIMDLALSAHIKILDYSCSQDRDTQKIQWIDRFIEELRTNDKWVIPALKQIREICSLFGEAPQNLSQSQRSPHVFYRHDLINQLQHNHALVTLVAENLATYMESMRMYGRDNEDYDPQTVRLGSRYSHVQEVQERLNFLRFLLKDGQLWLCAPQAKQIWKCLAENAVYLCDREACFKWYSKLMGDEPDLDPDINKDFFESNVLQLDPSLLTENGMKCFERFFKAVNCREGKLVAKRRAYMMDDLELIGLDYLWRVVIQSNDDIACRAIDLLKEIYTNLGPRLQVNQVVIHEDFIQSCFDRLKASYDTLCVLDGDKDSINCARQEAVRMVRVLTVLREYINECDSDYHEERTILPMSRAFRGKHLSFIVRFPNQGRQVDDLEVWSHTNDTIGSVRRCILNRIKANVAHTKIELFVGGELIDPGDDRKLIGQLNLKDKSLITAKLTQISSNMPSSPDSSSDSSTGSPGNHGNHYSDGPNPEVESCLPGVIMSLHPRYISFLWQVADLGSSLNMPPLRDGARVLMKLMPPDSTTIEKLRAICLDHAKLGESSLSPSLDSLFFGPSASQVLYLTEVVYALLMPAGAPLTDDSSDFQFHFLKSGGLPLVLSMLTRNNFLPNADMETRRGAYLNALKIAKLLLTAIGYGHVRAVAEACQPGVEGVNPMTSVNQVTHDQAVVLQSALQSIPNPSSECMLRNVSVRLAQQISDEASRYMPDICVIRAIQKIIWTSGCGGLQLVFSPNEEVTKIYEKTNAGNEPDLEDEQVCCEALEVMTLCFALIPTALDALSKEKAWQTFIIDLLLHCHSKTVRQVAQEQFFLMCTRCCMGHRPLLFFITLLFTVLGSTARERAKHSGDYFTLLRHLLNYAYNSNINVPNAEVLLNNEIDWLKRIRDDVKRTGETGVEETILEGHLGVTKELLAFQTPEKKFHIGCEKGGANLIKELIDDFIFPASNVYLQYMRNGELPAEQAIPVCGSPATINAGFELLVALAVGCVRNLKQIVDSLTEMYYIGTAITTCEALTEWEYLPPVGPRPPKGFVGLKNAGATCYMNSVIQQLYMIPSIRNGILAIEGTGSDVDDDMSGDEKQDNESNVDPRDDVFGYPQQFEDKPPLSKTEDRKEYNIGVLRHLQVIFGHLAASRLQYYVPRGFWKQFRLWGEPVNLREQHDALEFFNSLVDSLDEALKALGHPAMLSKVLGGSFADQKICQGCPHRYECEESFTTLNVDIRNHQNLLDSLEQYVKGDLLEGANAYHCEKCNKKVDTVKRLLIKKLPPVLAIQLKRFDYDWERECAIKFNDYFEFPRELDMEPYTVAGVAKLEGDNVNPESQLIQQNEQSESEKAGSTKYRLVGVLVHSGQASGGHYYSYIIQRNGGDGEKNRWYKFDDGDVTECKMDDDEEMKNQCFGGEYMGEVFDHMMKRMSYRRQKRWWNAYILFYERMDTIGHDDEVIRYISEIAITTRPHQIVMPSAIERSVRKQNVQFMHNRMQYSLEYFQFMKKLLTCNGVYLNPPPGQDHLSPEAEEITMISIQLAARFLFTTGFHTKKIVRGSASDWYDALCILLRHSKNVRFWFAHNVLFNVSNRFSEYLLECPSAEVRGAFAKLIVFIAHFSLQDGPCPSPFASPGPSSQAYDNLSLSDHLLRAVLNLLRREVSEHGRHLQQYFNLFVMYANLGVAEKTQLLKLSVPATFMLVSLDEGPGPPIKYQYAELGKLYSVVSQLIRCCNVSSRMQSSINGNPSLPNPFGDPNLSQPIMPIQQNVVDILFVRTSYVKKIIEDCSNSDETVKLLRFCCWENPQFSSTVLSELLWQVAYSYTYELRPYLDLLLQILLIEDSWQTHRIHNALKGIPDDRDGLFDTIQRSKNHYQKRAYQCIKCMVALFSSCPVAYQILQGNGDLKRKWTWAVEWLGDELERRPYTGNPQYTYNNWSPPVQSNETSNGYFLERSHSARMTLAKACELCPEEEPDDQDAPDEHESPPPEDAPLYPHSPGSQYQQNNHVHGQPYTGPAAHHMNNPQRTGQRAQENYEGGEEVSPPQTKGSVKCTY.

Positions 1 to 44 are enriched in polar residues; sequence MTATTRGSPVGGNDNQGQAPDGQSQPPLQQNQTSSPDSSNENSP. The segment at 1 to 64 is disordered; it reads MTATTRGSPV…DAPPQIEDEE (64 aa). A phosphoserine mark is found at serine 374, serine 375, and serine 588. Residues 967–999 form a disordered region; it reads QISSNMPSSPDSSSDSSTGSPGNHGNHYSDGPN. Over residues 969–989 the composition is skewed to low complexity; sequence SSNMPSSPDSSSDSSTGSPGN. The region spanning 1557-1956 is the USP domain; that stretch reads VGLKNAGATC…NAYILFYERM (400 aa). The Nucleophile role is filled by cysteine 1566. The disordered stretch occupies residues 1592–1633; it reads GSDVDDDMSGDEKQDNESNVDPRDDVFGYPQQFEDKPPLSKT. Serine 1600 carries the post-translational modification Phosphoserine. 2 stretches are compositionally biased toward basic and acidic residues: residues 1601-1617 and 1624-1633; these read GDEK…RDDV and FEDKPPLSKT. Zn(2+)-binding residues include cysteine 1727, histidine 1729, cysteine 1771, and cysteine 1774. Catalysis depends on histidine 1879, which acts as the Proton acceptor. Serine 2443 carries the phosphoserine modification. Over residues 2475 to 2484 the composition is skewed to acidic residues; that stretch reads PEEEPDDQDA. The tract at residues 2475–2559 is disordered; that stretch reads PEEEPDDQDA…QTKGSVKCTY (85 aa). Polar residues-rich tracts occupy residues 2503 to 2513 and 2527 to 2537; these read PGSQYQQNNHV and NNPQRTGQRAQ. The residue at position 2540 (tyrosine 2540) is a Phosphotyrosine. Serine 2547 is subject to Phosphoserine. Position 2551 is a phosphothreonine (threonine 2551).

The protein belongs to the peptidase C19 family. As to quaternary structure, interacts with SMAD4, MARK4, NUAK1 and BIRC5/survivin. Interacts with DCX. Interacts with OTUD4 and USP7; the interaction is direct. Highest levels in liver and brain with expression also detected in heart, muscle, spleen and kidney (at protein leve). Ubiquitously expressed in adult tissues.

Its subcellular location is the cytoplasm. It localises to the cytosol. The protein resides in the cell projection. It is found in the growth cone. The protein localises to the cytoskeleton. Its subcellular location is the cilium axoneme. The enzyme catalyses Thiol-dependent hydrolysis of ester, thioester, amide, peptide and isopeptide bonds formed by the C-terminal Gly of ubiquitin (a 76-residue protein attached to proteins as an intracellular targeting signal).. Its function is as follows. Deubiquitinase involved both in the processing of ubiquitin precursors and of ubiquitinated proteins. May therefore play an important regulatory role at the level of protein turnover by preventing degradation of proteins through the removal of conjugated ubiquitin. Specifically hydrolyzes 'Lys-11'-, followed by 'Lys-63'-, 'Lys-48'- and 'Lys-6'-linked polyubiquitins chains. Essential component of TGF-beta/BMP signaling cascade. Specifically deubiquitinates monoubiquitinated SMAD4, opposing the activity of E3 ubiquitin-protein ligase TRIM33. Deubiquitinates alkylation repair enzyme ALKBH3. OTUD4 recruits USP7 and USP9X to stabilize ALKBH3, thereby promoting the repair of alkylated DNA lesions. Deubiquitinates RNA demethylase enzyme ALKBH5, promoting its stability. Deubiquitinates mTORC2 complex component RICTOR at 'Lys-294' by removing 'Lys-63'-linked polyubiquitin chains, stabilizing RICTOR and enhancing its binding to MTOR, thus promoting mTORC2 complex assembly. Regulates chromosome alignment and segregation in mitosis by regulating the localization of BIRC5/survivin to mitotic centromeres. Involved in axonal growth and neuronal cell migration. Regulates cellular clock function by enhancing the protein stability and transcriptional activity of the core circadian protein BMAL1 via its deubiquitinating activity. Acts as a regulator of peroxisome import by mediating deubiquitination of PEX5: specifically deubiquitinates PEX5 monoubiquitinated at 'Cys-11' following its retrotranslocation into the cytosol, resetting PEX5 for a subsequent import cycle. Deubiquitinates PEG10. Inhibits the activation of the Hippo signaling pathway via deubiquitination of AMOTL2 at 'Lys-337' and 'Lys-404' which prohibits its interaction with and activation of LATS2. Loss of LATS2 activation and subsequent loss of YAP1 phosphorylation results in an increase in YAP1-driven transcription of target genes. The protein is Ubiquitin carboxyl-terminal hydrolase 9X of Mus musculus (Mouse).